The primary structure comprises 460 residues: Cysteine--tRNA ligase (460 aa).

Cys-28 is a Zn(2+) binding site. The 'HIGH' region signature appears at 30-40 (VTIYDLCHIGH). Zn(2+) is bound by residues Cys-209, His-234, and Glu-238. Residues 266–270 (KMSKS) carry the 'KMSKS' region motif. Lys-269 serves as a coordination point for ATP.

Belongs to the class-I aminoacyl-tRNA synthetase family. As to quaternary structure, monomer. It depends on Zn(2+) as a cofactor.

It localises to the cytoplasm. It carries out the reaction tRNA(Cys) + L-cysteine + ATP = L-cysteinyl-tRNA(Cys) + AMP + diphosphate. This is Cysteine--tRNA ligase from Vibrio vulnificus (strain CMCP6).